The primary structure comprises 344 residues: Phosphate acyltransferase (344 aa).

It belongs to the PlsX family. As to quaternary structure, homodimer. Probably interacts with PlsY.

It is found in the cytoplasm. It carries out the reaction a fatty acyl-[ACP] + phosphate = an acyl phosphate + holo-[ACP]. It participates in lipid metabolism; phospholipid metabolism. Functionally, catalyzes the reversible formation of acyl-phosphate (acyl-PO(4)) from acyl-[acyl-carrier-protein] (acyl-ACP). This enzyme utilizes acyl-ACP as fatty acyl donor, but not acyl-CoA. This is Phosphate acyltransferase from Acaryochloris marina (strain MBIC 11017).